The chain runs to 268 residues: Tryptophan synthase alpha chain (268 aa).

Active-site proton acceptor residues include Glu49 and Asp60.

This sequence belongs to the TrpA family. In terms of assembly, tetramer of two alpha and two beta chains.

It carries out the reaction (1S,2R)-1-C-(indol-3-yl)glycerol 3-phosphate + L-serine = D-glyceraldehyde 3-phosphate + L-tryptophan + H2O. It participates in amino-acid biosynthesis; L-tryptophan biosynthesis; L-tryptophan from chorismate: step 5/5. Its function is as follows. The alpha subunit is responsible for the aldol cleavage of indoleglycerol phosphate to indole and glyceraldehyde 3-phosphate. This chain is Tryptophan synthase alpha chain, found in Salmonella choleraesuis (strain SC-B67).